The following is a 438-amino-acid chain: Envelope glycoprotein M (438 aa).

Residues methionine 1 to arginine 13 lie on the Intravirion side of the membrane. Residues leucine 14–isoleucine 34 form a helical membrane-spanning segment. Residues glycine 35–serine 88 lie on the Virion surface side of the membrane. The helical transmembrane segment at alanine 89 to isoleucine 109 threads the bilayer. The Intravirion portion of the chain corresponds to arginine 110–proline 132. The helical transmembrane segment at proline 133–leucine 153 threads the bilayer. At serine 154 to methionine 158 the chain is on the virion surface side. The helical transmembrane segment at valine 159–phenylalanine 179 threads the bilayer. The Intravirion segment spans residues cysteine 180–alanine 212. The chain crosses the membrane as a helical span at residues valine 213 to leucine 233. The Virion surface segment spans residues glycine 234–threonine 248. A helical transmembrane segment spans residues valine 249–leucine 269. Topologically, residues valine 270 to glutamine 276 are intravirion. A helical membrane pass occupies residues valine 277–histidine 297. Over aspartate 298–arginine 317 the chain is Virion surface. Residues valine 318–valine 338 form a helical membrane-spanning segment. The Intravirion segment spans residues arginine 339 to lysine 438. Positions glutamate 395–lysine 438 are disordered. The segment covering proline 425–lysine 438 has biased composition (pro residues).

This sequence belongs to the herpesviridae glycoprotein M family. Interacts (via N-terminus) with gN (via N-terminus). The gM-gN heterodimer forms the gCII complex. N-glycosylated. It is not O-glycosylated.

It localises to the virion membrane. The protein resides in the host Golgi apparatus. The protein localises to the host trans-Golgi network. It is found in the host endosome membrane. Its subcellular location is the host nucleus inner membrane. Functionally, envelope glycoprotein important for virion assembly and egress. Plays a role in the correct incorporation of gH-gL into virion membrane. Directs the glycoprotein N (gN) to the host trans-Golgi network. In Bovine herpesvirus 1.1 (strain Cooper) (BoHV-1), this protein is Envelope glycoprotein M.